Reading from the N-terminus, the 712-residue chain is T-box transcription factor TBX2 (712 aa).

Positions 109–287 (LEAKELWDQF…NNPFAKGFRD (179 aa)) form a DNA-binding region, T-box. A disordered region spans residues 313–450 (PERDGAESDA…EGKEQGLAPL (138 aa)). Over residues 326–336 (DPPPAREPPTS) the composition is skewed to pro residues. Serine 336, serine 342, and serine 360 each carry phosphoserine. Basic and acidic residues-rich tracts occupy residues 363-372 (EPERLSEERA), 391-409 (TEPERARERRSPERGKEPA), and 421-444 (SLEKERAEARRKDEGRKEAAEGKE). The segment at 518 to 601 (GGNGGGGGPG…ATSAAAAAAA (84 aa)) is repression domain 1 (RD1). Serine 622, serine 653, serine 657, and serine 676 each carry phosphoserine. The segment at 637–687 (LTTGLASEGSKAAGGNSREPSPLPELALRKVGAPSRGALSPSGSAKEAANE) is disordered.

In terms of assembly, binds DNA as a monomer. Interacts with PML (isoform PML-2, isoform PML-3 and isoform PML-4). In terms of tissue distribution, expressed primarily in adult in kidney, lung, and placenta. Weak expression in heart and ovary.

Its subcellular location is the nucleus. Its function is as follows. Transcription factor which acts as a transcriptional repressor. May also function as a transcriptional activator. Binds to the palindromic T site 5'-TTCACACCTAGGTGTGAA-3' DNA sequence, or a half-site, which are present in the regulatory region of several genes. Required for cardiac atrioventricular canal formation. May cooperate with NKX2.5 to negatively modulate expression of NPPA/ANF in the atrioventricular canal. May play a role as a positive regulator of TGFB2 expression, perhaps acting in concert with GATA4 in the developing outflow tract myocardium. Plays a role in limb pattern formation. Acts as a transcriptional repressor of ADAM10 gene expression, perhaps in concert with histone deacetylase HDAC1 as cofactor. Involved in branching morphogenesis in both developing lungs and adult mammary glands, via negative modulation of target genes; acting redundantly with TBX3. Required, together with TBX3, to maintain cell proliferation in the embryonic lung mesenchyme; perhaps acting downstream of SHH, BMP and TGFbeta signaling. Involved in modulating early inner ear development, acting independently of, and also redundantly with TBX3, in different subregions of the developing ear. Acts as a negative regulator of PML function in cellular senescence. Acts as a negative regulator of expression of CDKN1A/p21, IL33 and CCN4; repression of CDKN1A is enhanced in response to UV-induced stress, perhaps as a result of phosphorylation by p38 MAPK. Negatively modulates expression of CDKN2A/p14ARF and CDH1/E-cadherin. Plays a role in induction of the epithelial-mesenchymal transition (EMT). Plays a role in melanocyte proliferation, perhaps via regulation of cyclin CCND1. Involved in melanogenesis, acting via negative modulation of expression of DHICA oxidase/TYRP1 and P protein/OCA2. Involved in regulating retinal pigment epithelium (RPE) cell proliferation, perhaps via negatively modulating transcription of the transcription factor CEBPD. The protein is T-box transcription factor TBX2 (TBX2) of Homo sapiens (Human).